A 77-amino-acid chain; its full sequence is Small ribosomal subunit protein bS18 (77 aa).

Belongs to the bacterial ribosomal protein bS18 family. Part of the 30S ribosomal subunit. Forms a tight heterodimer with protein bS6.

Its function is as follows. Binds as a heterodimer with protein bS6 to the central domain of the 16S rRNA, where it helps stabilize the platform of the 30S subunit. In Bacillus cereus (strain ATCC 10987 / NRS 248), this protein is Small ribosomal subunit protein bS18.